The primary structure comprises 145 residues: D-aminoacyl-tRNA deacylase (145 aa).

The Gly-cisPro motif, important for rejection of L-amino acids signature appears at 137–138 (GP).

It belongs to the DTD family. Homodimer.

It localises to the cytoplasm. It carries out the reaction glycyl-tRNA(Ala) + H2O = tRNA(Ala) + glycine + H(+). The enzyme catalyses a D-aminoacyl-tRNA + H2O = a tRNA + a D-alpha-amino acid + H(+). An aminoacyl-tRNA editing enzyme that deacylates mischarged D-aminoacyl-tRNAs. Also deacylates mischarged glycyl-tRNA(Ala), protecting cells against glycine mischarging by AlaRS. Acts via tRNA-based rather than protein-based catalysis; rejects L-amino acids rather than detecting D-amino acids in the active site. By recycling D-aminoacyl-tRNA to D-amino acids and free tRNA molecules, this enzyme counteracts the toxicity associated with the formation of D-aminoacyl-tRNA entities in vivo and helps enforce protein L-homochirality. This Shewanella pealeana (strain ATCC 700345 / ANG-SQ1) protein is D-aminoacyl-tRNA deacylase.